Here is a 537-residue protein sequence, read N- to C-terminus: Eukaryotic translation initiation factor 3 subunit L (537 aa).

Residues 300 to 512 (TFSSILLYIQ…IHIADTKVSH (213 aa)) enclose the PCI domain.

It belongs to the eIF-3 subunit L family. As to quaternary structure, component of the eukaryotic translation initiation factor 3 (eIF-3) complex.

The protein resides in the cytoplasm. In terms of biological role, component of the eukaryotic translation initiation factor 3 (eIF-3) complex, which is involved in protein synthesis of a specialized repertoire of mRNAs and, together with other initiation factors, stimulates binding of mRNA and methionyl-tRNAi to the 40S ribosome. The eIF-3 complex specifically targets and initiates translation of a subset of mRNAs involved in cell proliferation. This is Eukaryotic translation initiation factor 3 subunit L from Culex quinquefasciatus (Southern house mosquito).